We begin with the raw amino-acid sequence, 523 residues long: 2-isopropylmalate synthase (523 aa).

A Pyruvate carboxyltransferase domain is found at 5 to 267; sequence VIIFDTTLRD…HTNINHHEIW (263 aa). Positions 14, 202, 204, and 238 each coordinate Mn(2+). Residues 392 to 523 form a regulatory domain region; that stretch reads RLDYFSVQSG…QNKENNKETV (132 aa).

This sequence belongs to the alpha-IPM synthase/homocitrate synthase family. LeuA type 1 subfamily. Homodimer. Mn(2+) is required as a cofactor.

The protein localises to the cytoplasm. It catalyses the reaction 3-methyl-2-oxobutanoate + acetyl-CoA + H2O = (2S)-2-isopropylmalate + CoA + H(+). It participates in amino-acid biosynthesis; L-leucine biosynthesis; L-leucine from 3-methyl-2-oxobutanoate: step 1/4. Catalyzes the condensation of the acetyl group of acetyl-CoA with 3-methyl-2-oxobutanoate (2-ketoisovalerate) to form 3-carboxy-3-hydroxy-4-methylpentanoate (2-isopropylmalate). This Salmonella newport (strain SL254) protein is 2-isopropylmalate synthase.